The sequence spans 138 residues: Vesicle transport protein GOT1B (138 aa).

N-acetylmethionine is present on M1. At 1-9 (MISLTDTQK) the chain is on the cytoplasmic side. A helical transmembrane segment spans residues 10 to 30 (IGMGLTGFGVFFLFFGMILFF). The Lumenal portion of the chain corresponds to 31-32 (DK). A helical membrane pass occupies residues 33 to 53 (ALLAIGNVLFVAGLAFVIGLE). Topologically, residues 54–68 (RTFRFFFQKHKMKAT) are cytoplasmic. A helical transmembrane segment spans residues 69–89 (GFFLGGVFVVLIGWPLIGMIF). Residue E90 is a topological domain, lumenal. The chain crosses the membrane as a helical span at residues 91–109 (IYGFFLLFRGFFPVVVGFI). The Cytoplasmic portion of the chain corresponds to 110-138 (RRVPVLGSLLNLPGIRSFVDKVGESNNMV).

This sequence belongs to the GOT1 family.

The protein localises to the golgi apparatus membrane. Its function is as follows. May be involved in fusion of ER-derived transport vesicles with the Golgi complex. The chain is Vesicle transport protein GOT1B from Bos taurus (Bovine).